We begin with the raw amino-acid sequence, 204 residues long: Imidazole glycerol phosphate synthase subunit HisH (204 aa).

A Glutamine amidotransferase type-1 domain is found at 5 to 204; the sequence is KVVIIDTGCA…AKLIQNFLEL (200 aa). Residue C80 is the Nucleophile of the active site. Active-site residues include H186 and E188.

Heterodimer of HisH and HisF.

The protein localises to the cytoplasm. The catalysed reaction is 5-[(5-phospho-1-deoxy-D-ribulos-1-ylimino)methylamino]-1-(5-phospho-beta-D-ribosyl)imidazole-4-carboxamide + L-glutamine = D-erythro-1-(imidazol-4-yl)glycerol 3-phosphate + 5-amino-1-(5-phospho-beta-D-ribosyl)imidazole-4-carboxamide + L-glutamate + H(+). It catalyses the reaction L-glutamine + H2O = L-glutamate + NH4(+). Its pathway is amino-acid biosynthesis; L-histidine biosynthesis; L-histidine from 5-phospho-alpha-D-ribose 1-diphosphate: step 5/9. In terms of biological role, IGPS catalyzes the conversion of PRFAR and glutamine to IGP, AICAR and glutamate. The HisH subunit catalyzes the hydrolysis of glutamine to glutamate and ammonia as part of the synthesis of IGP and AICAR. The resulting ammonia molecule is channeled to the active site of HisF. The polypeptide is Imidazole glycerol phosphate synthase subunit HisH (Vibrio parahaemolyticus serotype O3:K6 (strain RIMD 2210633)).